Here is a 238-residue protein sequence, read N- to C-terminus: Ribonuclease PH (238 aa).

Residues R86 and 124–126 each bind phosphate; that span reads GTR.

Belongs to the RNase PH family. In terms of assembly, homohexameric ring arranged as a trimer of dimers.

It catalyses the reaction tRNA(n+1) + phosphate = tRNA(n) + a ribonucleoside 5'-diphosphate. Phosphorolytic 3'-5' exoribonuclease that plays an important role in tRNA 3'-end maturation. Removes nucleotide residues following the 3'-CCA terminus of tRNAs; can also add nucleotides to the ends of RNA molecules by using nucleoside diphosphates as substrates, but this may not be physiologically important. Probably plays a role in initiation of 16S rRNA degradation (leading to ribosome degradation) during starvation. This is Ribonuclease PH from Geotalea uraniireducens (strain Rf4) (Geobacter uraniireducens).